A 231-amino-acid chain; its full sequence is MNNFFQGYNLLFQHSLFASYMDWFHSFNCSLLLGVLVFVTLLFGYLIFGTFYFKSKKIEYQFGELLCSIFPTIILLMQMVPSLSLLYYYGLMNLDSNLTVKVTGHQWYWSYEYSDIPGLEFDSYMKSLDQLSLGEPRLLEVDNRCVIPCDTNIRFCITSADVIHAWALNSLSVKLDAMSGILSTFSYSFPMVGVFYGQCSEICGANHSFMPIALEVTLLDNFKSWCFGTME.

Residues 1–30 are Mitochondrial intermembrane-facing; the sequence is MNNFFQGYNLLFQHSLFASYMDWFHSFNCS. The chain crosses the membrane as a helical span at residues 31–52; the sequence is LLLGVLVFVTLLFGYLIFGTFY. Topologically, residues 53-69 are mitochondrial matrix; that stretch reads FKSKKIEYQFGELLCSI. The helical transmembrane segment at 70 to 89 threads the bilayer; that stretch reads FPTIILLMQMVPSLSLLYYY. The Mitochondrial intermembrane segment spans residues 90–231; that stretch reads GLMNLDSNLT…FKSWCFGTME (142 aa). His164, Cys199, Glu201, Cys203, His207, and Met210 together coordinate Cu cation. A Mg(2+)-binding site is contributed by Glu201.

Belongs to the cytochrome c oxidase subunit 2 family. Component of the cytochrome c oxidase (complex IV, CIV), a multisubunit enzyme composed of a catalytic core of 3 subunits and several supernumerary subunits. The complex exists as a monomer or a dimer and forms supercomplexes (SCs) in the inner mitochondrial membrane with ubiquinol-cytochrome c oxidoreductase (cytochrome b-c1 complex, complex III, CIII). It depends on Cu cation as a cofactor.

It localises to the mitochondrion inner membrane. It carries out the reaction 4 Fe(II)-[cytochrome c] + O2 + 8 H(+)(in) = 4 Fe(III)-[cytochrome c] + 2 H2O + 4 H(+)(out). Functionally, component of the cytochrome c oxidase, the last enzyme in the mitochondrial electron transport chain which drives oxidative phosphorylation. The respiratory chain contains 3 multisubunit complexes succinate dehydrogenase (complex II, CII), ubiquinol-cytochrome c oxidoreductase (cytochrome b-c1 complex, complex III, CIII) and cytochrome c oxidase (complex IV, CIV), that cooperate to transfer electrons derived from NADH and succinate to molecular oxygen, creating an electrochemical gradient over the inner membrane that drives transmembrane transport and the ATP synthase. Cytochrome c oxidase is the component of the respiratory chain that catalyzes the reduction of oxygen to water. Electrons originating from reduced cytochrome c in the intermembrane space (IMS) are transferred via the dinuclear copper A center (CU(A)) of subunit 2 and heme A of subunit 1 to the active site in subunit 1, a binuclear center (BNC) formed by heme A3 and copper B (CU(B)). The BNC reduces molecular oxygen to 2 water molecules using 4 electrons from cytochrome c in the IMS and 4 protons from the mitochondrial matrix. This chain is Cytochrome c oxidase subunit 2, found in Caenorhabditis elegans.